The primary structure comprises 86 residues: Small ribosomal subunit protein uS17 (86 aa).

This sequence belongs to the universal ribosomal protein uS17 family. In terms of assembly, part of the 30S ribosomal subunit.

Its function is as follows. One of the primary rRNA binding proteins, it binds specifically to the 5'-end of 16S ribosomal RNA. This Bifidobacterium adolescentis (strain ATCC 15703 / DSM 20083 / NCTC 11814 / E194a) protein is Small ribosomal subunit protein uS17.